Here is a 165-residue protein sequence, read N- to C-terminus: UPF0254 protein MmarC6_1720 (165 aa).

It belongs to the UPF0254 family.

In Methanococcus maripaludis (strain C6 / ATCC BAA-1332), this protein is UPF0254 protein MmarC6_1720.